The following is a 746-amino-acid chain: NAD(P)H-quinone oxidoreductase subunit 5, chloroplastic (746 aa).

16 helical membrane-spanning segments follow: residues 9–29 (WIIP…LLLF), 40–60 (WTFL…YLSI), 89–109 (IDPL…LVLI), 125–145 (FAYM…SNLI), 147–167 (VYFF…FWFT), 185–205 (GDFG…SFEF), 221–241 (VNFL…IAKS), 258–278 (TPIS…FLVA), 280–300 (LLPL…IGII), 327–347 (LGYM…FHLI), 354–374 (ALLF…VGYS), 396–416 (TAFL…CFWS), 425–445 (LLFS…TAFY), 547–567 (ILFP…IGIP), 608–628 (FSVS…KPFY), and 723–743 (YLFL…FFYF).

It belongs to the complex I subunit 5 family. In terms of assembly, NDH is composed of at least 16 different subunits, 5 of which are encoded in the nucleus.

The protein resides in the plastid. Its subcellular location is the chloroplast thylakoid membrane. The enzyme catalyses a plastoquinone + NADH + (n+1) H(+)(in) = a plastoquinol + NAD(+) + n H(+)(out). It catalyses the reaction a plastoquinone + NADPH + (n+1) H(+)(in) = a plastoquinol + NADP(+) + n H(+)(out). NDH shuttles electrons from NAD(P)H:plastoquinone, via FMN and iron-sulfur (Fe-S) centers, to quinones in the photosynthetic chain and possibly in a chloroplast respiratory chain. The immediate electron acceptor for the enzyme in this species is believed to be plastoquinone. Couples the redox reaction to proton translocation, and thus conserves the redox energy in a proton gradient. This Barbarea verna (Land cress) protein is NAD(P)H-quinone oxidoreductase subunit 5, chloroplastic (ndhF).